Consider the following 436-residue polypeptide: Phosphomethylpyrimidine synthase (436 aa).

Residues Asn69, Met98, Tyr127, His163, 185–187 (SRG), 226–229 (DACR), and Glu265 contribute to the substrate site. His269 lines the Zn(2+) pocket. Tyr292 contributes to the substrate binding site. His333 lines the Zn(2+) pocket. Cys409, Cys412, and Cys416 together coordinate [4Fe-4S] cluster.

It belongs to the ThiC family. The cofactor is [4Fe-4S] cluster.

The catalysed reaction is 5-amino-1-(5-phospho-beta-D-ribosyl)imidazole + S-adenosyl-L-methionine = 4-amino-2-methyl-5-(phosphooxymethyl)pyrimidine + CO + 5'-deoxyadenosine + formate + L-methionine + 3 H(+). Its pathway is cofactor biosynthesis; thiamine diphosphate biosynthesis. Functionally, catalyzes the synthesis of the hydroxymethylpyrimidine phosphate (HMP-P) moiety of thiamine from aminoimidazole ribotide (AIR) in a radical S-adenosyl-L-methionine (SAM)-dependent reaction. The protein is Phosphomethylpyrimidine synthase of Clostridium perfringens (strain ATCC 13124 / DSM 756 / JCM 1290 / NCIMB 6125 / NCTC 8237 / Type A).